The sequence spans 876 residues: DNA polymerase I (876 aa).

A 5'-3' exonuclease domain is found at 1-310; the sequence is MKNKLVLIDG…FAIADSVTDE (310 aa). The tract at residues 289–876 is subtilisin large fragment; sequence TDEGEKPLAG…HYGPTWYDAK (588 aa). The polymerase stretch occupies residues 469–876; it reads EQDRLLTELE…HYGPTWYDAK (408 aa).

Belongs to the DNA polymerase type-A family. Single-chain monomer with multiple functions.

It catalyses the reaction DNA(n) + a 2'-deoxyribonucleoside 5'-triphosphate = DNA(n+1) + diphosphate. Its function is as follows. In addition to polymerase activity, the recombinant enzyme has strand displacement and 5'-3' exonuclease activity, but lacks proofreading 3'-5' exonuclease activity. This is DNA polymerase I (polA) from Geobacillus stearothermophilus (Bacillus stearothermophilus).